A 399-amino-acid polypeptide reads, in one-letter code: Formaldehyde dismutase (399 aa).

Zn(2+) is bound at residue C46. 47-51 (GSDQH) is an NAD(+) binding site. Zn(2+)-binding residues include H67, C97, C100, C103, C111, and D170. T174 serves as a coordination point for NAD(+). H177 provides a ligand contact to Zn(2+). Residues 197–198 (PV), 218–219 (DQ), R223, V263, H268, P299, 299–301 (PGI), and 336–338 (GMA) contribute to the NAD(+) site.

Belongs to the zinc-containing alcohol dehydrogenase family. Homotetramer. Zn(2+) is required as a cofactor. Requires NAD(+) as cofactor. NADH serves as cofactor.

The catalysed reaction is 2 formaldehyde + H2O = methanol + formate + H(+). With respect to regulation, inhibited by the substrate analog pyrazole but not by NAD analogs such as AMP, ADP, ATP or N-methylnicotinamide chloride. Functionally, active against a range of primary alcohols as well as some secondary alcohols. Exhibits higher activity against alcohols with longer carbon chains. This is Formaldehyde dismutase from Pseudomonas putida (Arthrobacter siderocapsulatus).